Here is a 464-residue protein sequence, read N- to C-terminus: Fumarate hydratase class II (464 aa).

Substrate is bound by residues 97–99, 128–131, 138–140, and threonine 186; these read SGT, HPND, and SSN. Residue histidine 187 is the Proton donor/acceptor of the active site. Serine 317 is a catalytic residue. Residues serine 318 and 323 to 325 contribute to the substrate site; that span reads KVN.

Belongs to the class-II fumarase/aspartase family. Fumarase subfamily. In terms of assembly, homotetramer.

It is found in the cytoplasm. The catalysed reaction is (S)-malate = fumarate + H2O. It functions in the pathway carbohydrate metabolism; tricarboxylic acid cycle; (S)-malate from fumarate: step 1/1. In terms of biological role, involved in the TCA cycle. Catalyzes the stereospecific interconversion of fumarate to L-malate. This is Fumarate hydratase class II from Leptospira interrogans serogroup Icterohaemorrhagiae serovar copenhageni (strain Fiocruz L1-130).